The primary structure comprises 908 residues: Protein translocase subunit SecA (908 aa).

ATP contacts are provided by residues Q87, 105 to 109 (GEGKT), and D512. The interval 876–908 (QAPMIRDGEKVGRNDPCPCGSGRKYKQCHGKLS) is disordered. Positions 892, 894, 903, and 904 each coordinate Zn(2+). A compositionally biased stretch (basic residues) spans 898–908 (RKYKQCHGKLS).

It belongs to the SecA family. Monomer and homodimer. Part of the essential Sec protein translocation apparatus which comprises SecA, SecYEG and auxiliary proteins SecDF-YajC and YidC. Requires Zn(2+) as cofactor.

It localises to the cell inner membrane. It is found in the cytoplasm. It catalyses the reaction ATP + H2O + cellular proteinSide 1 = ADP + phosphate + cellular proteinSide 2.. Part of the Sec protein translocase complex. Interacts with the SecYEG preprotein conducting channel. Has a central role in coupling the hydrolysis of ATP to the transfer of proteins into and across the cell membrane, serving both as a receptor for the preprotein-SecB complex and as an ATP-driven molecular motor driving the stepwise translocation of polypeptide chains across the membrane. The chain is Protein translocase subunit SecA from Shewanella baltica (strain OS185).